A 316-amino-acid polypeptide reads, in one-letter code: Glutathione synthetase (316 aa).

The region spanning 125–310 is the ATP-grasp domain; sequence KLFTAWFSDL…ITGMLMDAIE (186 aa). An ATP-binding site is contributed by 151–207; that stretch reads WEKHSDIILKPLDGMGGASIFRVKEGDPNLGVIAETLTEHGTRYCMAQNYLPAIKDG. Mg(2+) contacts are provided by E281 and N283.

This sequence belongs to the prokaryotic GSH synthase family. As to quaternary structure, homotetramer. Requires Mg(2+) as cofactor. Mn(2+) is required as a cofactor.

The catalysed reaction is gamma-L-glutamyl-L-cysteine + glycine + ATP = glutathione + ADP + phosphate + H(+). The protein operates within sulfur metabolism; glutathione biosynthesis; glutathione from L-cysteine and L-glutamate: step 2/2. Its activity is regulated as follows. Inhibited by 7,8-dihydrofolate, methotrexate and trimethoprim. The protein is Glutathione synthetase (gshB) of Escherichia coli (strain K12).